Here is a 464-residue protein sequence, read N- to C-terminus: MKVLLLLVCLVFAYVNASYDACYNVVCPSNYQCRAEGDQAYCVPEHHEYGCDRHSCGRGYECVERWDSFCCKPIHHRPHPHPRPPHPHPRPTNCDYTSCPREFDCHVINRNVTACLPDNHVCRDFQCPVGTHCFNGERGPHCVSDTHYPNLCRVTKCSYDFTCKMVRGNPTCLRNHDGISTHSPTHTPTHSPTTSPTHCPSCTELAPFCHSAGLVCRTILNPSCVSAVRGIINTRSCCTYIAVCASNSTSTTGATTGATTPTSTTGAATTAAATTTTATSTTGAATTAPATTTTTSTTGAATTAPATTTTSTTGAATTAPATTTTTATTIVGVTTANSVGGLTTTRATTVAGVTTANSVGGLTTAGITTVAGATTGNSVGGLTTARATTVADVTTANSVGGLTTAGVTTVAGATTGNSVGGLTTARATTVADVTTANSVGGLTTSRATTIAGATTANSIGGLTN.

The first 17 residues, 1 to 17, serve as a signal peptide directing secretion; it reads MKVLLLLVCLVFAYVNA. The 23-residue stretch at 21 to 43 folds into the Follistatin-like 1 domain; it reads ACYNVVCPSNYQCRAEGDQAYCV. Residue asparagine 111 is glycosylated (N-linked (GlcNAc...) asparagine). Follistatin-like domains are found at residues 121 to 143 and 151 to 173; these read VCRD…PHCV and LCRV…PTCL. The N-linked (GlcNAc...) asparagine glycan is linked to asparagine 247. The tract at residues 250 to 320 is disordered; sequence STTGATTGAT…STTGAATTAP (71 aa).

As to quaternary structure, binds to the C-terminal region of pspB.

It is found in the spore wall. Functionally, forms a triad with cellulose and pspB that is essential for spore outer layer formation. This chain is Spore coat protein SP65 (cotE), found in Dictyostelium discoideum (Social amoeba).